A 92-amino-acid chain; its full sequence is Small ribosomal subunit protein uS19 (92 aa).

It belongs to the universal ribosomal protein uS19 family.

Protein S19 forms a complex with S13 that binds strongly to the 16S ribosomal RNA. The sequence is that of Small ribosomal subunit protein uS19 from Bifidobacterium animalis subsp. lactis (strain AD011).